The primary structure comprises 86 residues: Kappa-theraphotoxin-Cg1a 6 (86 aa).

A signal peptide spans Met1–Ala21. A propeptide spanning residues Ala22–Arg50 is cleaved from the precursor. Cystine bridges form between Cys52–Cys66, Cys59–Cys71, and Cys65–Cys78. Phe84 carries the phenylalanine amide modification.

This sequence belongs to the neurotoxin 10 (Hwtx-1) family. 28 (Jztx-11) subfamily. In terms of tissue distribution, expressed by the venom gland.

The protein localises to the secreted. In terms of biological role, this toxin acts as a voltage-dependent gating-modifier. It inhibits the sodium conductance (IC(50)=124 nM) and slows the fast inactivation (EC(50)=1180 nM) of Nav1.5/SCN5A. It significantly shifts the activation to more depolarized voltages and decreases the deactivation of Nav1.5 currents upon extreme depolarization, but only slightly affects voltage-dependence of steady-state inactivation. In addition, this toxin causes an approximately five-fold decrease in the rate of recovery from inactivation and an approximately 1.9-fold reduction in the closed-state inactivation rate. This toxin integrates the functions of site 3 toxins (alpha-scorpion toxins) with site 4 toxins (beta-scorpion and spider toxins) by targeting multiple sites on Nav1.5. Also shows inhibition of voltage-gated potassium channels (5 uM completely inhibits Kv2.1/KCNB1, whereas 5 uM moderately inhibits Kv4.2/KCND2 Kv4.1/KCND1 channels). This Chilobrachys guangxiensis (Chinese earth tiger tarantula) protein is Kappa-theraphotoxin-Cg1a 6.